Consider the following 98-residue polypeptide: Feather keratin 1 (98 aa).

Belongs to the avian keratin family. The avian keratins (F-ker, S-ker, C-ker and B-ker) are a complex mixture of very similar polypeptides.

This Gallus gallus (Chicken) protein is Feather keratin 1.